The sequence spans 176 residues: Ribosome maturation factor RimM (176 aa).

Residues 99-173 (ADEYYWHDLL…TMTITPLEGL (75 aa)) enclose the PRC barrel domain.

Belongs to the RimM family. In terms of assembly, binds ribosomal protein uS19.

The protein localises to the cytoplasm. Functionally, an accessory protein needed during the final step in the assembly of 30S ribosomal subunit, possibly for assembly of the head region. Essential for efficient processing of 16S rRNA. May be needed both before and after RbfA during the maturation of 16S rRNA. It has affinity for free ribosomal 30S subunits but not for 70S ribosomes. The protein is Ribosome maturation factor RimM of Trichlorobacter lovleyi (strain ATCC BAA-1151 / DSM 17278 / SZ) (Geobacter lovleyi).